A 61-amino-acid polypeptide reads, in one-letter code: Large ribosomal subunit protein uL30 (61 aa).

It belongs to the universal ribosomal protein uL30 family. Part of the 50S ribosomal subunit.

In Fervidobacterium nodosum (strain ATCC 35602 / DSM 5306 / Rt17-B1), this protein is Large ribosomal subunit protein uL30.